A 164-amino-acid chain; its full sequence is uncharacterized protein (164 aa).

Residues 1–17 (MNSRVPATQSWFSSHLP) show a composition bias toward polar residues. Residues 1-48 (MNSRVPATQSWFSSHLPTTEPDLEPATAAEGSTTETATLSPETTSFND) form a disordered region. Low complexity predominate over residues 24-45 (EPATAAEGSTTETATLSPETTS). Residues 64–84 (MLLSFGIITVIGLAVAMVLYI) traverse the membrane as a helical segment. Positions 106–130 (TEEQDELEQELLEHGRDAASMQAAA) form a coiled coil.

It is found in the membrane. This is an uncharacterized protein from Mus musculus (Mouse).